The primary structure comprises 892 residues: Translation initiation factor IF-2 (892 aa).

The span at 165–175 shows a compositional bias: basic and acidic residues; it reads EEQAELERQKT. Disordered regions lie at residues 165–250 and 264–300; these read EEQA…EDDS and ERAR…AHGF. Positions 208 to 222 are enriched in low complexity; sequence PRAVRPAPAARPSVS. The region spanning 391–560 is the tr-type G domain; sequence PRPPVVTIMG…SIQAEVLELK (170 aa). Residues 400 to 407, 446 to 450, and 500 to 503 each bind GTP; these read GHVDHGKT, DTPGH, and SKID.

It belongs to the TRAFAC class translation factor GTPase superfamily. Classic translation factor GTPase family. IF-2 subfamily.

The protein localises to the cytoplasm. In terms of biological role, one of the essential components for the initiation of protein synthesis. Protects formylmethionyl-tRNA from spontaneous hydrolysis and promotes its binding to the 30S ribosomal subunits. Also involved in the hydrolysis of GTP during the formation of the 70S ribosomal complex. This is Translation initiation factor IF-2 from Xylella fastidiosa (strain 9a5c).